The chain runs to 1136 residues: MVWLEPPLLLPIFFLASHVGAAVDLTLLADLRLTEPQRFFLTCVSGEAGAGRGSDAWGPPLLLEKDDRIVRTPRPWQPPHIARNGSSRVTVRGFSQPSDLVGVFSCVGGGGTRVLYVHNSPGAHLLPDKVTHTVNKGDTAVLSARVRKEKQTDVIWKSNGSYFYTLDRHEAQDGQFLLQLPNVQPSSSGIYSATYLEASPLGSAFFRLIVRGCEAGRWGQDCTKECPGCLHGGVCHDQDGECVCPPGFTGTRCEQACREGRFGQSCQEQCPGTSGCRGLTFCLPDPYGCSCGSGWRGSQCQEACAPGRFGADCHLQCQCQNGGTCDRFSGCVCPSGWHGMHCEKSDRIPQILDMVSELEFNLDTMPRINCAAAGNPFPVRGSMELRKPDGTVLLSTKAIVEPDRTTAEFEVPRLALGDSGLWECRVSTSGGQDSRRFRINVKVPPVPLTAPRLLAKQSRQLVVSPLVSFSGDGPIASVRLHYRPQDSTMAWSTIVVDPSENVTLMNLRPKTGYSVRVQLSRPGEGGEGAWGPPTLMTTDCPEPLLKPWLEGWHVEGPDRLRVSWSLPPVPGPLVGDGFLLRLWDGARGQERRENVSSPQARTALLTGLTPGTYYQLDVRLYHCTLLGPASPAARVLLPPSGPPAPRHLHAQALSDSEIQLMWQRPEAAAGPISKYIVEVQVAGGSGDPLWMDVDRPEETSTIVRGLNASTRYLFRVRASVQGPGDWSNVVEQSTLGNGLQIEGPVQEIHAAEEGLDQQLVLAVVGSVSATCLTILAALLTLACIRKSCLHRRRTFTYQSGSGEETILQFSSGTLTLTRRPKPQPEPLNYPVLEWEDITFEDLIGEGNFGQVIRAMIKKDGLKMNAAIKMLKEYASENDHRDFAGELEVLCKLGHHPNIINLLGACENRGYLYIAIEYAPYGNLLDFLRKSRVLETDPAFAREHGTASTLSSRQLLRFASDAANGMQYLSEKQFIHRDLAARNVLVGENLASKIADFGLSRGEEVYVKKTMGRLPVRWMAIESLNYSVYTTKSDVWSFGVLLWEIVSLGGTPYCGMTCAELYEKLPQAYRMEQPRNCDDEVYELMRQCWRDRPYERPPFAQIALQLGRMLEARKAYVNMSLFENFTYAGIDATAEEA.

The N-terminal stretch at 1 to 23 (MVWLEPPLLLPIFFLASHVGAAV) is a signal peptide. At 24 to 757 (DLTLLADLRL…IHAAEEGLDQ (734 aa)) the chain is on the extracellular side. In terms of domain architecture, Ig-like C2-type 1 spans 43–106 (CVSGEAGAGR…PSDLVGVFSC (64 aa)). N-linked (GlcNAc...) asparagine glycans are attached at residues asparagine 84 and asparagine 159. EGF-like domains are found at residues 212-254 (GCEA…TRCE), 256-301 (ACRE…SQCQ), and 303-343 (ACAP…MHCE). 3 disulfide bridges follow: cysteine 226–cysteine 235, cysteine 229–cysteine 242, and cysteine 244–cysteine 253. 3 cysteine pairs are disulfide-bonded: cysteine 317-cysteine 325, cysteine 319-cysteine 331, and cysteine 333-cysteine 342. Positions 370–424 (CAAAGNPFPVRGSMELRKPDGTVLLSTKAIVEPDRTTAEFEVPRLALGDSGLWEC) constitute an Ig-like C2-type 2 domain. 3 consecutive Fibronectin type-III domains span residues 444-543 (PPVP…CPEP), 546-640 (KPWL…LPPS), and 644-737 (APRH…TLGN). N-linked (GlcNAc...) asparagine glycosylation is found at asparagine 501, asparagine 594, and asparagine 707. The chain crosses the membrane as a helical span at residues 758-782 (QLVLAVVGSVSATCLTILAALLTLA). The Cytoplasmic portion of the chain corresponds to 783–1136 (CIRKSCLHRR…AGIDATAEEA (354 aa)). The region spanning 837–1116 (ITFEDLIGEG…RMLEARKAYV (280 aa)) is the Protein kinase domain. Residues 843–851 (IGEGNFGQV) and lysine 868 contribute to the ATP site. Catalysis depends on aspartate 977, which acts as the Proton acceptor. At tyrosine 1005 the chain carries Phosphotyrosine; by autocatalysis.

This sequence belongs to the protein kinase superfamily. Tyr protein kinase family. Tie subfamily. As to quaternary structure, heterodimer with TEK/TIE2. Interacts with SVEP1 (via C-terminus). In terms of processing, phosphorylated on tyrosine residues in response to ANGPT1, most likely by TEK/TIE2. As to expression, specifically expressed in developing vascular endothelial cells.

The protein localises to the cell membrane. The enzyme catalyses L-tyrosyl-[protein] + ATP = O-phospho-L-tyrosyl-[protein] + ADP + H(+). In terms of biological role, transmembrane tyrosine-protein kinase that may modulate TEK/TIE2 activity and contribute to the regulation of angiogenesis. The sequence is that of Tyrosine-protein kinase receptor Tie-1 (TIE1) from Bos taurus (Bovine).